We begin with the raw amino-acid sequence, 95 residues long: Protein S100-A10 (95 aa).

N6-acetyllysine is present on residues lysine 23, lysine 28, lysine 54, and lysine 57. The EF-hand domain occupies 47–82 (KDPLAVDKIMKDLDQCRDGKVGFQSFLSLVAGLIIA). An ancestral calcium site region spans residues 60 to 71 (DQCRDGKVGFQS).

This sequence belongs to the S-100 family. In terms of assembly, heterotetramer containing 2 light chains of S100A10/p11 and 2 heavy chains of ANXA2/p36. Interacts with SCN10A. Interacts with TASOR.

Functionally, because S100A10 induces the dimerization of ANXA2/p36, it may function as a regulator of protein phosphorylation in that the ANXA2 monomer is the preferred target (in vitro) of tyrosine-specific kinase. In Rattus norvegicus (Rat), this protein is Protein S100-A10 (S100a10).